Consider the following 528-residue polypeptide: Nucleolar GTP-binding protein 1 (528 aa).

The OBG-type G domain occupies Arg168–Leu335. Residues Gly174 to Ser181, Asp220 to Ile224, and Ser287 to Asp290 each bind GTP. The interval Pro470–Lys528 is disordered. Positions Arg509–Arg518 are enriched in basic and acidic residues. Over residues Lys519–Lys528 the composition is skewed to basic residues.

Belongs to the TRAFAC class OBG-HflX-like GTPase superfamily. OBG GTPase family. NOG subfamily.

Its subcellular location is the nucleus. The protein localises to the nucleolus. In terms of biological role, involved in the biogenesis of the 60S ribosomal subunit. The sequence is that of Nucleolar GTP-binding protein 1 (NOG1) from Encephalitozoon cuniculi (strain GB-M1) (Microsporidian parasite).